The primary structure comprises 127 residues: Protein pkiA (127 aa).

The region spanning 16–127 (IFAKIISGAI…GGRQMNWPPG (112 aa)) is the HIT domain.

In Dictyostelium discoideum (Social amoeba), this protein is Protein pkiA (pkiA).